Consider the following 235-residue polypeptide: TVP38/TMEM64 family inner membrane protein YdjZ (235 aa).

The Periplasmic portion of the chain corresponds to 1–13 (MMMMQSRKIWYYR). A helical transmembrane segment spans residues 14–34 (ITLIILLFAMLLAWALLPGVH). The Cytoplasmic segment spans residues 35 to 64 (EFINRSVAAFAAVDQQGIERFIQSYGALAA). Residues 65–85 (VVSFLLMILQAIAAPLPAFLI) form a helical membrane-spanning segment. Residues 86–95 (TFANASLFGA) are Periplasmic-facing. The VTT domain stretch occupies residues 90-199 (ASLFGAFWGG…IVYSWAGSML (110 aa)). The helical transmembrane segment at 96 to 116 (FWGGLLSWTSSMAGAALCFFI) threads the bilayer. The Cytoplasmic portion of the chain corresponds to 117-176 (ARVMGREVVEKLTGKTVLDSMDGFFTRYGKHTILVCRLLPFVPFDPISYAAGLTSIRFRS). The helical transmembrane segment at 177 to 197 (FFIATGLGQLPATIVYSWAGS) threads the bilayer. Over 198–202 (MLTGG) the chain is Periplasmic. The chain crosses the membrane as a helical span at residues 203-223 (TFWFVTGLFILFALTVVIFMA). Over 224–235 (KKIWLERQKRNA) the chain is Cytoplasmic.

The protein belongs to the TVP38/TMEM64 family.

It is found in the cell inner membrane. The sequence is that of TVP38/TMEM64 family inner membrane protein YdjZ (ydjZ) from Escherichia coli (strain K12).